The chain runs to 295 residues: GTPase Era (295 aa).

The Era-type G domain maps to 7 to 176 (KTISVCIIGR…IKSKAKVSPW (170 aa)). Residues 15–22 (GRPNSGKS) are G1. Residue 15–22 (GRPNSGKS) participates in GTP binding. A G2 region spans residues 41–45 (QTTRS). Residues 62-65 (DTPG) form a G3 region. GTP contacts are provided by residues 62-66 (DTPGI) and 124-127 (NKID). Positions 124 to 127 (NKID) are G4. Residues 152–154 (ISA) form a G5 region. The 78-residue stretch at 204 to 281 (LQQELPYKLT…HLFLFVKVHA (78 aa)) folds into the KH type-2 domain.

The protein belongs to the TRAFAC class TrmE-Era-EngA-EngB-Septin-like GTPase superfamily. Era GTPase family. In terms of assembly, monomer.

The protein resides in the cytoplasm. It is found in the cell inner membrane. In terms of biological role, an essential GTPase that binds both GDP and GTP, with rapid nucleotide exchange. Plays a role in 16S rRNA processing and 30S ribosomal subunit biogenesis and possibly also in cell cycle regulation and energy metabolism. This is GTPase Era from Rickettsia typhi (strain ATCC VR-144 / Wilmington).